A 461-amino-acid chain; its full sequence is Phosphomethylpyrimidine synthase (461 aa).

Substrate contacts are provided by residues asparagine 80, methionine 109, tyrosine 139, histidine 175, 195 to 197 (SRG), 236 to 239 (DSLR), and glutamate 275. Zn(2+) is bound at residue histidine 279. Tyrosine 302 lines the substrate pocket. Histidine 343 is a Zn(2+) binding site. Residues cysteine 423, cysteine 426, and cysteine 431 each contribute to the [4Fe-4S] cluster site.

The protein belongs to the ThiC family. It depends on [4Fe-4S] cluster as a cofactor.

It carries out the reaction 5-amino-1-(5-phospho-beta-D-ribosyl)imidazole + S-adenosyl-L-methionine = 4-amino-2-methyl-5-(phosphooxymethyl)pyrimidine + CO + 5'-deoxyadenosine + formate + L-methionine + 3 H(+). It participates in cofactor biosynthesis; thiamine diphosphate biosynthesis. Catalyzes the synthesis of the hydroxymethylpyrimidine phosphate (HMP-P) moiety of thiamine from aminoimidazole ribotide (AIR) in a radical S-adenosyl-L-methionine (SAM)-dependent reaction. The protein is Phosphomethylpyrimidine synthase of Picosynechococcus sp. (strain ATCC 27264 / PCC 7002 / PR-6) (Agmenellum quadruplicatum).